A 797-amino-acid polypeptide reads, in one-letter code: N-acetylneuraminate (7)9-O-acetyltransferase (797 aa).

The Cytoplasmic portion of the chain corresponds to 1–18 (MAALAYNLGKREINHYFS). A helical membrane pass occupies residues 19-39 (VRSAKVLALVAVLLLAACHLA). Residues 40-313 (SRRYRGNDSC…QPRPPVTLIQ (274 aa)) are Lumenal-facing. N-linked (GlcNAc...) asparagine glycosylation is present at N46. S94 acts as the Acyl-ester intermediate in catalysis. Residues N175 and N187 are each glycosylated (N-linked (GlcNAc...) asparagine). Residues D270 and H273 contribute to the active site. Residues 314–334 (KLAACFFTLSIIGYLIFYIIH) traverse the membrane as a helical segment. Over 335–363 (RNAHRKNKPCTDLESGEEKKNIINTPVSS) the chain is Cytoplasmic. A helical membrane pass occupies residues 364 to 384 (LEILLQSFCKLGLIMAYFYMC). Residues 385-395 (DRANLFMKENK) lie on the Lumenal side of the membrane. Residues 396-416 (FYTHSSFFIPIIYILVLGVFY) traverse the membrane as a helical segment. At 417 to 439 (NENTKETKVLNREQTDEWKGWMQ) the chain is on the cytoplasmic side. A helical membrane pass occupies residues 440-460 (LVILIYHISGASTFLPVYMHI). A topological domain (lumenal) is located at residue R461. The chain crosses the membrane as a helical span at residues 462–482 (VLVAAYLFQTGYGHFSYFWIK). Topologically, residues 483-486 (GDFG) are cytoplasmic. The chain crosses the membrane as a helical span at residues 487–507 (IYRVCQVLFRLNFLVVVLCIV). The Lumenal segment spans residues 508 to 513 (MDRPYQ). Residues 514–534 (FYYFVPLVTVWFMVIYVTLAL) traverse the membrane as a helical segment. The Cytoplasmic segment spans residues 535-547 (WPQIIQKKANGNC). The helical transmembrane segment at 548 to 568 (FWHFGLLLKLGFLLLFICFLA) threads the bilayer. Topologically, residues 569–605 (YSQGAFEKIFSLWPLSKCFELKGNVYEWWFRWRLDRY) are lumenal. A helical membrane pass occupies residues 606 to 626 (VVFHGMLFAFIYLALQKRQIL). Residues 627 to 638 (SEGKGEPLFSNK) are Cytoplasmic-facing. The helical transmembrane segment at 639 to 659 (ISNFLLFISVVSFLTYSIWAS) threads the bilayer. Topologically, residues 660–671 (SCKNKAECNELH) are lumenal. A helical membrane pass occupies residues 672–692 (PSVSVVQILAFILIRNIPGYA). Topologically, residues 693 to 698 (RSVYSS) are cytoplasmic. The chain crosses the membrane as a helical span at residues 699–719 (FFAWFGKISLELFICQYHIWL). The Lumenal portion of the chain corresponds to 720 to 725 (AADTRG). A helical membrane pass occupies residues 726–746 (ILVLIPGNPMLNIIVSTFIFV). Residues 747-770 (CVAHEISQITNDLAQIIIPKDNSS) are Cytoplasmic-facing. A helical membrane pass occupies residues 771-791 (LLKRLACIAAFFCGLLILSSI). The Lumenal portion of the chain corresponds to 792–797 (QDKSKH).

It belongs to the PC-esterase family. CASD1 subfamily. Post-translationally, N-glycosylated. As to expression, highly expressed in peripheral B lymphocytes.

The protein localises to the golgi apparatus membrane. The enzyme catalyses CMP-N-acetyl-beta-neuraminate + acetyl-CoA = CMP-N-acetyl-9-O-acetyl-beta-neuraminate + CoA. The catalysed reaction is a ganglioside GD3 (d18:1(4E)) + acetyl-CoA = a ganglioside Ac-O-7-GD3(d18:1(4E)) + CoA. It catalyses the reaction CMP-N-acetyl-beta-neuraminate + acetyl-CoA = CMP-N-acetyl-7-O-acetyl-beta-neuraminate + CoA. Its function is as follows. Key enzyme in the biosynthesis of O-acetylated (O-Ac) sialoglycans such as gangliosides O-AcGD3 and O-AcGD2, which affect various processes such as cell-cell interactions, host-pathogen recognition. Catalyzes the transfer of an acetyl group from a donor, the acetyl-coenzyme-A molecule (acetyl-CoA), to the C7/8/9 OH-position of a sialic acid residue. The primary site of O-acetyl group transfer on sialic acid seems to depend on cell type and can be C7, from which the O-acetyl group could subsequently migrate to the C8 and then to the C9 position, or at C9 with possibility of migrating to the C8 and then to the C7 position. Together with ST8SIA1 (GD3 synthase) it increases the levels of ganglioside Ac-O-7-GD3. Can transfer the acetyl group from acetyl-CoA to free sialate (N-acetylneuraminate, Neu5Ac) in vitro, but has preferred substrate specificity for CMP-activated sialate (CMP-Neu5Ac), resulting in the formation of 9-O-acetylated CMP-Neu5Ac (CMP-Neu5,9Ac2). CMP-Neu5,9Ac2 may be used by sialyltransferases as a sialate donor for glycoconjugate acceptors such as ganglioside GD3. O-acetylation at position C9 of ganglioside GD3 can counteract the pro-apoptotic effects of the ganglioside GD3 in tumor cells. This Homo sapiens (Human) protein is N-acetylneuraminate (7)9-O-acetyltransferase.